A 231-amino-acid polypeptide reads, in one-letter code: Ribose-5-phosphate isomerase A (231 aa).

Substrate contacts are provided by residues 31–34, 86–89, and 100–103; these read TGST, DGAD, and KGLG. Glutamate 109 functions as the Proton acceptor in the catalytic mechanism. Lysine 127 contributes to the substrate binding site.

This sequence belongs to the ribose 5-phosphate isomerase family. As to quaternary structure, homodimer.

It catalyses the reaction aldehydo-D-ribose 5-phosphate = D-ribulose 5-phosphate. The protein operates within carbohydrate degradation; pentose phosphate pathway; D-ribose 5-phosphate from D-ribulose 5-phosphate (non-oxidative stage): step 1/1. Catalyzes the reversible conversion of ribose-5-phosphate to ribulose 5-phosphate. The chain is Ribose-5-phosphate isomerase A from Gluconobacter oxydans (strain 621H) (Gluconobacter suboxydans).